The following is a 600-amino-acid chain: Aspartate--tRNA(Asp/Asn) ligase (600 aa).

Residue Glu174 coordinates L-aspartate. The tract at residues Gln198 to Lys201 is aspartate. Arg220 provides a ligand contact to L-aspartate. ATP contacts are provided by residues Arg220–Glu222 and Gln229. An L-aspartate-binding site is contributed by His457. Position 491 (Glu491) interacts with ATP. Arg498 serves as a coordination point for L-aspartate. Gly543–Arg546 serves as a coordination point for ATP.

Belongs to the class-II aminoacyl-tRNA synthetase family. Type 1 subfamily. As to quaternary structure, homodimer.

The protein resides in the cytoplasm. The catalysed reaction is tRNA(Asx) + L-aspartate + ATP = L-aspartyl-tRNA(Asx) + AMP + diphosphate. In terms of biological role, aspartyl-tRNA synthetase with relaxed tRNA specificity since it is able to aspartylate not only its cognate tRNA(Asp) but also tRNA(Asn). Reaction proceeds in two steps: L-aspartate is first activated by ATP to form Asp-AMP and then transferred to the acceptor end of tRNA(Asp/Asn). This chain is Aspartate--tRNA(Asp/Asn) ligase, found in Burkholderia cenocepacia (strain ATCC BAA-245 / DSM 16553 / LMG 16656 / NCTC 13227 / J2315 / CF5610) (Burkholderia cepacia (strain J2315)).